We begin with the raw amino-acid sequence, 250 residues long: Acetoacetate decarboxylase 1 (250 aa).

Catalysis depends on lysine 120, which acts as the Schiff-base intermediate with acetoacetate.

The protein belongs to the ADC family.

It catalyses the reaction acetoacetate + H(+) = acetone + CO2. In terms of biological role, catalyzes the conversion of acetoacetate to acetone and carbon dioxide. The sequence is that of Acetoacetate decarboxylase 1 from Bradyrhizobium diazoefficiens (strain JCM 10833 / BCRC 13528 / IAM 13628 / NBRC 14792 / USDA 110).